The following is a 220-amino-acid chain: N-(5'-phosphoribosyl)anthranilate isomerase (220 aa).

It belongs to the TrpF family.

It carries out the reaction N-(5-phospho-beta-D-ribosyl)anthranilate = 1-(2-carboxyphenylamino)-1-deoxy-D-ribulose 5-phosphate. Its pathway is amino-acid biosynthesis; L-tryptophan biosynthesis; L-tryptophan from chorismate: step 3/5. This Xylella fastidiosa (strain M12) protein is N-(5'-phosphoribosyl)anthranilate isomerase.